We begin with the raw amino-acid sequence, 390 residues long: Putative nickel insertion protein (390 aa).

The protein belongs to the LarC family.

The chain is Putative nickel insertion protein from Geobacter metallireducens (strain ATCC 53774 / DSM 7210 / GS-15).